The sequence spans 282 residues: Probable endonuclease 4 (282 aa).

Residues histidine 70, histidine 110, glutamate 146, aspartate 180, histidine 183, histidine 217, aspartate 230, histidine 232, and glutamate 262 each coordinate Zn(2+).

The protein belongs to the AP endonuclease 2 family. Zn(2+) serves as cofactor.

The enzyme catalyses Endonucleolytic cleavage to 5'-phosphooligonucleotide end-products.. Its function is as follows. Endonuclease IV plays a role in DNA repair. It cleaves phosphodiester bonds at apurinic or apyrimidinic (AP) sites, generating a 3'-hydroxyl group and a 5'-terminal sugar phosphate. The chain is Probable endonuclease 4 from Wolinella succinogenes (strain ATCC 29543 / DSM 1740 / CCUG 13145 / JCM 31913 / LMG 7466 / NCTC 11488 / FDC 602W) (Vibrio succinogenes).